The following is a 655-amino-acid chain: DNA mismatch repair protein MutL (655 aa).

Disordered regions lie at residues 357–416 and 439–460; these read EKKQ…DDYT and DFDSDISNHSDSDIKGSVSKDP. Residues 371 to 383 are compositionally biased toward basic and acidic residues; it reads SHEEDEKNDDKAY. Polar residues predominate over residues 402-416; the sequence is NTSVSTSPNSDDDYT.

The protein belongs to the DNA mismatch repair MutL/HexB family.

This protein is involved in the repair of mismatches in DNA. It is required for dam-dependent methyl-directed DNA mismatch repair. May act as a 'molecular matchmaker', a protein that promotes the formation of a stable complex between two or more DNA-binding proteins in an ATP-dependent manner without itself being part of a final effector complex. This chain is DNA mismatch repair protein MutL, found in Staphylococcus saprophyticus subsp. saprophyticus (strain ATCC 15305 / DSM 20229 / NCIMB 8711 / NCTC 7292 / S-41).